A 4576-amino-acid polypeptide reads, in one-letter code: Mucin-2 (4576 aa).

An N-terminal signal peptide occupies residues 1–20 (MGLPLARLVAACLVLALAKG). Ser-21 carries the phosphoserine modification. Residues 32–205 (HVCSTWGDFH…KINKPEVQCE (174 aa)) form the VWFD 1 domain. 29 disulfide bridges follow: Cys-34/Cys-166, Cys-56/Cys-204, Cys-64/Cys-163, Cys-216/Cys-253, Cys-223/Cys-248, Cys-235/Cys-273, Cys-255/Cys-261, Cys-263/Cys-289, Cys-293/Cys-327, Cys-306/Cys-319, Cys-310/Cys-349, Cys-329/Cys-343, Cys-351/Cys-373, Cys-368/Cys-385, Cys-371/Cys-380, Cys-389/Cys-526, Cys-411/Cys-561, Cys-433/Cys-441, Cys-572/Cys-617, Cys-586/Cys-612, Cys-599/Cys-637, Cys-619/Cys-625, Cys-627/Cys-652, Cys-659/Cys-696, Cys-672/Cys-686, Cys-676/Cys-716, Cys-698/Cys-710, Cys-718/Cys-740, and Cys-738/Cys-747. Asp-46 contacts Ca(2+). Residues Met-143 and Met-151 each contribute to the Cu(+) site. Glu-153 lines the Cu(2+) pocket. N-linked (GlcNAc...) asparagine glycosylation is present at Asn-160. Residues Asp-168, Asn-170, and Glu-177 each contribute to the Ca(2+) site. His-275 is a Cu(2+) binding site. The region spanning 293–349 (CPNNMVYLESSSPCVDTCSHLEVSSLCEEHYMDGCFCPEGTVYDDITGSGCIPVSQC) is the TIL domain. Position 322 (His-322) interacts with Cu(2+). Residue Met-324 coordinates Cu(+). The 176-residue stretch at 387 to 562 (ETCALEGGSH…NTWKAQSSCH (176 aa)) folds into the VWFD 2 domain. Residue Asp-401 participates in Ca(2+) binding. An N-linked (GlcNAc...) asparagine glycan is attached at Asn-421. Ca(2+) contacts are provided by Asn-528, Asn-530, Leu-532, Asp-535, and Asp-536. The N-linked (GlcNAc...) asparagine glycan is linked to Asn-668. N-linked (GlcNAc...) asparagine glycosylation occurs at Asn-768. 21 disulfides stabilise this stretch: Cys-782–Cys-818, Cys-800–Cys-812, Cys-820–Cys-843, Cys-837–Cys-855, Cys-841–Cys-850, Cys-859–Cys-990, Cys-881–Cys-1025, Cys-890–Cys-987, Cys-907–Cys-914, Cys-1035–Cys-1078, Cys-1049–Cys-1073, Cys-1060–Cys-1100, Cys-1080–Cys-1088, Cys-1090–Cys-1115, Cys-1106–Cys-1135, Cys-1119–Cys-1161, Cys-1143–Cys-1185, Cys-1165–Cys-1179, Cys-1187–Cys-1211, Cys-1206–Cys-1236, and Cys-1209–Cys-1219. Residue Asn-838 is glycosylated (N-linked (GlcNAc...) asparagine). One can recognise a VWFD 3 domain in the interval 857 to 1026 (STCSIYGSGH…NSWKEASTCP (170 aa)). Asp-871 is a Ca(2+) binding site. Residue Asn-893 is glycosylated (N-linked (GlcNAc...) asparagine). Asn-992, Asp-994, Asn-999, and Asp-1000 together coordinate Ca(2+). N-linked (GlcNAc...) asparagine glycosylation is found at Asn-1137 and Asn-1152. N-linked (GlcNAc...) asparagine glycosylation is found at Asn-1213, Asn-1228, and Asn-1244. Residues Thr-1265, Thr-1268, Thr-1269, Thr-1281, and Thr-1292 are each glycosylated (O-linked (GalNAc) threonine). Ca(2+) is bound by residues Asn-1305, His-1308, Gly-1315, Asp-1316, and Glu-1318. A glycan (N-linked (GlcNAc...) asparagine) is linked at Asn-1352. Residues Asp-1375 and Tyr-1376 each coordinate Ca(2+). Repeat copies occupy residues 1395–1415 (SPTTSTTTLSTTPPTSSPTTL), 1416–1427 (PTSSPVTSSATL), 1428–1437 (PTTSSITSTI), 1438–1453 (SPTTSPTTPLTTSPTT), and 1454–1460 (SPTTSPT). The disordered stretch occupies residues 1395–2866 (SPTTSTTTLS…PTTSSTFTTP (1472 aa)). A 7B repeat occupies 1478–1497 (PSTTSPTTPSTTPSTTSPTT). Residues 1498–1510 (PSTTSPTTPTSTS) form an 8A repeat. A 9B repeat occupies 1530–1556 (SPTTSPTTPSTTSPTISTTTSTISPTT). A 10A repeat occupies 1557–1572 (PSTTSPNTPSTTSSTI). One copy of the 10B repeat lies at 1573 to 1588 (PSTTSPTTPSTTSPTI). The 11A repeat unit spans residues 1589 to 1607 (STTTSTTSPTTPSTTSPTT). The 11B repeat unit spans residues 1608-1634 (PSTTSPTTPSTTSPTISTTTLTTSPTT). 2 consecutive repeat copies span residues 1635 to 1642 (PSTTSPTT) and 1665 to 1681 (ISPTTPSTTSPTTLSTT). N-linked (GlcNAc...) asparagine glycans are attached at residues Asn-2529 and Asn-2910. 2 stretches are compositionally biased toward low complexity: residues 2975–3623 (PSST…GSTP) and 3631–3706 (PGPT…TSPS). A disordered region spans residues 2975–3706 (PSSTTTETPT…SSTSPITSPS (732 aa)). N-linked (GlcNAc...) asparagine glycosylation is found at Asn-3734, Asn-3745, and Asn-3756. Positions 3764-3774 (STPTPSTPTPT) are enriched in pro residues. The disordered stretch occupies residues 3764-3806 (STPTPSTPTPTPSQTTTPSTTSSKSTPSTPQSTSPKSTLSTPT). Residues 3775 to 3806 (PSQTTTPSTTSSKSTPSTPQSTSPKSTLSTPT) are compositionally biased toward low complexity. N-linked (GlcNAc...) asparagine glycosylation is found at Asn-3823, Asn-3830, and Asn-3903. The VWFD 4 domain maps to 3880-4063 (CYCTGWGDPH…VNDPSKPHCP (184 aa)). 3 disulfide bridges follow: Cys-3882–Cys-4023, Cys-3904–Cys-4062, and Cys-3928–Cys-3936. Residues Asn-3991, Asn-4017, Asn-4028, Asn-4083, Asn-4149, Asn-4183, Asn-4254, Asn-4277, Asn-4351, Asn-4366, Asn-4434, Asn-4465, and Asn-4488 are each glycosylated (N-linked (GlcNAc...) asparagine). VWFC domains follow at residues 4213–4282 (CVGP…TSCK) and 4320–4387 (GVCV…KKCQ). Intrachain disulfides connect Cys-4471–Cys-4518, Cys-4485–Cys-4532, Cys-4494–Cys-4548, and Cys-4498–Cys-4550. In terms of domain architecture, CTCK spans 4471–4556 (CSAVSVMKEI…SCLCQDTVCG (86 aa)).

As to quaternary structure, homomultimer; disulfide-linked. The N- and C-terminus mediate their assembly into higher order structures to form filaments. The CTCK domains of two polypeptides associate in the endoplasmic reticulum to generate intermolecularly disulfide-bonded dimers. These dimers progress to the Golgi apparatus, which is a more acidic environment than the endoplasmic reticulum. Under acidic conditions, the N-termini form non-covalent intermolecular interactions that juxtapose assemblies of the third VWD domain (VWD3) from different CTCK-linked dimers. The VWD3 assemblies then become disulfide bonded to one another to produce long, disulfide-linked polymers that remain highly compact until secretion. Interacts with FCGBP. Interacts with AGR2; disulfide-linked. In terms of processing, O-glycosylated. O-glycosylation is required for mucin assembly. Goblet cells synthesize two forms of mucin that differ in branched chain O-glycosylation and the site of production in the colon. Post-translationally, may undergo proteolytic cleavage in the outer mucus layer of the colon, contributing to the expanded volume and loose nature of this layer which allows for bacterial colonization in contrast to the inner mucus layer which is dense and devoid of bacteria. At low pH of 6 and under, undergoes autocatalytic cleavage in vitro in the N-terminal region of the fourth VWD domain. It is likely that this also occurs in vivo and is triggered by the low pH of the late secretory pathway. Highly expressed in goblet cells of the colon with lower levels in the small intestine and no expression in the stomach (at protein level).

The protein localises to the secreted. In terms of biological role, coats the epithelia of the intestines and other mucus membrane-containing organs to provide a protective, lubricating barrier against particles and infectious agents at mucosal surfaces. Major constituent of the colon mucus, which is mainly formed by large polymeric networks of MUC2 secreted by goblet cells that cover the exposed surfaces of intestine. MUC2 networks form hydrogels that guard the underlying epithelium from pathogens and other hazardous matter entering from the outside world, while permitting nutrient absorption and gas exchange. Acts as a divalent copper chaperone that protects intestinal cells from copper toxicity and facilitates nutritional copper unptake into cells. Binds both Cu(2+) and its reduced form, Cu(1+), at two juxtaposed binding sites: Cu(2+), once reduced to Cu(1+) by vitamin C (ascorbate) or other dietary antioxidants, transits to the other binding site. MUC2-bound Cu(1+) is protected from oxidation in aerobic environments, and can be released for nutritional delivery to cells. Mucin gels store antimicrobial molecules that participate in innate immunity. Mucin glycoproteins also house and feed the microbiome, lubricate tissue surfaces, and may facilitate the removal of contaminants and waste products from the body. Goblet cells synthesize two forms of MUC2 mucin that differ in branched chain O-glycosylation and the site of production in the colon: a (1) 'thick' mucus that wraps the microbiota to form fecal pellets is produced in the proximal, ascending colon. 'Thick' mucus transits along the descending colon and is lubricated by a (2) 'thin' MUC2 mucus produced in the distal colon which adheres to the 'thick' mucus. The sequence is that of Mucin-2 from Mus musculus (Mouse).